We begin with the raw amino-acid sequence, 135 residues long: Fatty acid-binding protein 5 (135 aa).

A2 is subject to N-acetylalanine. S3 bears the Phosphoserine mark. Residues 24 to 34 (KELGVGLALRK) carry the Nuclear localization signal motif. N-eicosanoyl ethanolamine is bound by residues C43 and R109. C120 and C127 form a disulfide bridge. 129 to 131 (RVY) lines the (9Z,12Z)-octadecadienoate pocket. Residue Y131 participates in N-eicosanoyl ethanolamine binding. Position 131 (Y131) interacts with hexadecanoate. Y131 carries the post-translational modification Phosphotyrosine.

Belongs to the calycin superfamily. Fatty-acid binding protein (FABP) family. As to quaternary structure, monomer.

It is found in the cytoplasm. It localises to the nucleus. The protein localises to the synapse. Its subcellular location is the postsynaptic density. The protein resides in the secreted. It carries out the reaction hexadecanoate(out) = hexadecanoate(in). It catalyses the reaction (9Z,12Z)-octadecadienoate(out) = (9Z,12Z)-octadecadienoate(in). The enzyme catalyses (9Z)-octadecenoate(out) = (9Z)-octadecenoate(in). Intracellular carrier for long-chain fatty acids and related active lipids, such as endocannabinoids, that regulate the metabolism and actions of the ligands they bind. In addition to the cytosolic transport, selectively delivers specific fatty acids from the cytosol to the nucleus, wherein they activate nuclear receptors. Delivers retinoic acid to the nuclear receptor peroxisome proliferator-activated receptor delta; which promotes proliferation and survival. May also serve as a synaptic carrier of endocannabinoid at central synapses and thus controls retrograde endocannabinoid signaling. Modulates inflammation by regulating PTGES induction via NF-kappa-B activation, and prostaglandin E2 (PGE2) biosynthesis during inflammation. The protein is Fatty acid-binding protein 5 of Rattus norvegicus (Rat).